The primary structure comprises 382 residues: MADDKKTNEYTIEMDKLDHGNKDFEAPAPAVRPRGPPVAQLANNPILPVLAYCGSSILMTVMNKYVLSGRDFNLNFFLLCVQSIVCIVAIQTCKVSKLITYRDFNSDEAKKWFPITLLLIGMIYTGSKALQYLSIPVYTIFKNLTIILIAYGEVLWFGGSVTGLTLFSFGLMVLSSIIAAWADIKHAVESSGDATAKVSTLNAGYIWMLINCLCTSSYVLGMRKRIKLTNFKDFDTMFYNNLLSIPVLLVLTFLMEDWSSANIARNFPSTDRNGILFAMILSGLSSVFISYTSAWCVRVTSSTTYSMVGALNKLPIALSGLIFFDAPVTFPSVSAIVVGFISGIVYAVAKIKQSAKPKTGVLPMSNPPVSASSQSMRDSLRS.

Topologically, residues 1–40 (MADDKKTNEYTIEMDKLDHGNKDFEAPAPAVRPRGPPVAQ) are cytoplasmic. Residues 41–61 (LANNPILPVLAYCGSSILMTV) form a helical membrane-spanning segment. At 62–71 (MNKYVLSGRD) the chain is on the lumenal side. A helical membrane pass occupies residues 72 to 92 (FNLNFFLLCVQSIVCIVAIQT). Residues 93–110 (CKVSKLITYRDFNSDEAK) are Cytoplasmic-facing. A helical membrane pass occupies residues 111–127 (KWFPITLLLIGMIYTGS). Residues 128 to 134 (KALQYLS) lie on the Lumenal side of the membrane. Residues 135-151 (IPVYTIFKNLTIILIAY) traverse the membrane as a helical segment. At 152–160 (GEVLWFGGS) the chain is on the cytoplasmic side. Residues 161 to 182 (VTGLTLFSFGLMVLSSIIAAWA) form a helical membrane-spanning segment. Over 183–200 (DIKHAVESSGDATAKVST) the chain is Lumenal. The chain crosses the membrane as a helical span at residues 201-221 (LNAGYIWMLINCLCTSSYVLG). Over 222 to 233 (MRKRIKLTNFKD) the chain is Cytoplasmic. A helical transmembrane segment spans residues 234–254 (FDTMFYNNLLSIPVLLVLTFL). Topologically, residues 255-274 (MEDWSSANIARNFPSTDRNG) are lumenal. Residues 275–295 (ILFAMILSGLSSVFISYTSAW) traverse the membrane as a helical segment. The Cytoplasmic portion of the chain corresponds to 296–303 (CVRVTSST). The chain crosses the membrane as a helical span at residues 304-324 (TYSMVGALNKLPIALSGLIFF). Residues 325–327 (DAP) are Lumenal-facing. Residues 328-348 (VTFPSVSAIVVGFISGIVYAV) traverse the membrane as a helical segment. Topologically, residues 349 to 382 (AKIKQSAKPKTGVLPMSNPPVSASSQSMRDSLRS) are cytoplasmic. The segment at 358–382 (KTGVLPMSNPPVSASSQSMRDSLRS) is disordered. Over residues 367 to 382 (PPVSASSQSMRDSLRS) the composition is skewed to polar residues.

It belongs to the TPT transporter family. SLC35D subfamily. In terms of assembly, homooligomer.

The protein resides in the golgi apparatus membrane. It is found in the cytoplasmic vesicle membrane. It localises to the endoplasmic reticulum membrane. In terms of biological role, involved in the import of GDP-mannose from the cytoplasm into the Golgi lumen. The chain is GDP-mannose transporter (gmt1) from Aspergillus fumigatus (strain CBS 144.89 / FGSC A1163 / CEA10) (Neosartorya fumigata).